The following is a 143-amino-acid chain: Large ribosomal subunit protein uL13c (143 aa).

This sequence belongs to the universal ribosomal protein uL13 family. In terms of assembly, part of the 50S ribosomal subunit.

Its subcellular location is the plastid. It is found in the chloroplast. The chain is Large ribosomal subunit protein uL13c from Gracilaria tenuistipitata var. liui (Red alga).